The chain runs to 111 residues: Large ribosomal subunit protein uL22 (111 aa).

Belongs to the universal ribosomal protein uL22 family. Part of the 50S ribosomal subunit.

Its function is as follows. This protein binds specifically to 23S rRNA; its binding is stimulated by other ribosomal proteins, e.g. L4, L17, and L20. It is important during the early stages of 50S assembly. It makes multiple contacts with different domains of the 23S rRNA in the assembled 50S subunit and ribosome. Functionally, the globular domain of the protein is located near the polypeptide exit tunnel on the outside of the subunit, while an extended beta-hairpin is found that lines the wall of the exit tunnel in the center of the 70S ribosome. This chain is Large ribosomal subunit protein uL22, found in Alkalilimnicola ehrlichii (strain ATCC BAA-1101 / DSM 17681 / MLHE-1).